The chain runs to 261 residues: Glutamate racemase (261 aa).

Substrate-binding positions include 12-13 and 44-45; these read DS and YG. The active-site Proton donor/acceptor is the Cys76. Residue 77-78 participates in substrate binding; that stretch reads NT. Cys180 serves as the catalytic Proton donor/acceptor. 181 to 182 serves as a coordination point for substrate; it reads TH.

This sequence belongs to the aspartate/glutamate racemases family.

It catalyses the reaction L-glutamate = D-glutamate. The protein operates within cell wall biogenesis; peptidoglycan biosynthesis. Its function is as follows. Provides the (R)-glutamate required for cell wall biosynthesis. This chain is Glutamate racemase, found in Borreliella burgdorferi (strain ATCC 35210 / DSM 4680 / CIP 102532 / B31) (Borrelia burgdorferi).